We begin with the raw amino-acid sequence, 247 residues long: Fasciclin-like arabinogalactan protein 13 (247 aa).

The first 25 residues, 1–25, serve as a signal peptide directing secretion; that stretch reads MATTPLLLLLLTAVFLSTEITAQRA. The region spanning 34-179 is the FAS1 domain; it reads PINITAILEK…LAVYVVDMVL (146 aa). Asparagine 36, asparagine 55, asparagine 68, asparagine 141, and asparagine 150 each carry an N-linked (GlcNAc...) asparagine glycan. A disordered region spans residues 189–228; sequence KISPMAPPPKSKSPDVSDDSESSKKAAAPSESEKSGSGEM. A lipid anchor (GPI-anchor amidated glycine) is attached at glycine 224. Residues 225-247 constitute a propeptide, removed in mature form; sequence SGEMNTGLGLGLGLVVLCLKFLL.

The protein belongs to the fasciclin-like AGP family.

It is found in the cell membrane. Functionally, may be a cell surface adhesion protein. This chain is Fasciclin-like arabinogalactan protein 13 (FLA13), found in Arabidopsis thaliana (Mouse-ear cress).